The chain runs to 747 residues: Transcription factor phm2 (747 aa).

The zn(2)-C6 fungal-type DNA-binding region spans 21–50; sequence CNACRKRKRVRCDRLHPCSNCASRGLGSTC. 2 disordered regions span residues 112 to 150 and 414 to 436; these read GLQNQGSDARSDARCQPTPLSSETEFEYPVAPSPSDHGS and TAEPRNLYDTDFDEDSSALPESR.

It is found in the nucleus. Its function is as follows. Transcription factor that regulates the expression of the gene cluster that mediates the biosynthesis of the trans-fused decalin-containing tetramic acid phomasetin. This is Transcription factor phm2 from Pyrenochaetopsis sp.